Reading from the N-terminus, the 481-residue chain is Sphingosine kinase 2 (481 aa).

The DAGKc domain maps to 111–253 (GRPKRLLVFV…VDVATIAQGN (143 aa)). ATP-binding positions include 121–123 (NPF) and Thr153. Residue 178-181 (SGDG) participates in substrate binding. The active-site Proton donor/acceptor is the Asp180. Residues Glu185 and 210-212 (GTG) each bind ATP. Asp271 is a binding site for substrate. ATP contacts are provided by residues Arg278, Arg284, and 441-443 (DGE).

It depends on Mg(2+) as a cofactor. Highly expressed in flowers and siliques and at lower levels in roots, leaves and stems.

The protein localises to the vacuole membrane. It carries out the reaction a sphingoid base + ATP = a sphingoid 1-phosphate + ADP + H(+). With respect to regulation, activated by phosphatidic acid (PA). Binding with PA stimulates the activity by promoting the binding of substrate to the catalytic site. In terms of biological role, involved in the production of sphingolipid metabolites. Phosphorylates sphingosine and various l sphingoid long-chain base (LCB) products, such as phytosphingosine (PHS, 4-hydroxysphinganine), 4-hydroxy-8-sphingenine, 4,8-sphingadienine and D-erythro-dihydrosphingosine, but has a very few activity toward D,L-threo- dihydrosphingosine. Is required for abscisic acid (ABA) signaling that mediates stomatal closure, inhibition of seed germination and root elongation. May function upstream of PLDALPHA1 and phosphatidic acid (PA) in an amplification response to ABA that mediates stomatal closure. In Arabidopsis thaliana (Mouse-ear cress), this protein is Sphingosine kinase 2 (SPHK2).